The chain runs to 267 residues: 3-methyl-2-oxobutanoate hydroxymethyltransferase (267 aa).

Positions 45 and 84 each coordinate Mg(2+). Residues 45–46 (DS), Asp-84, and Lys-113 contribute to the 3-methyl-2-oxobutanoate site. Residue Glu-115 participates in Mg(2+) binding. Glu-182 (proton acceptor) is an active-site residue.

It belongs to the PanB family. Homodecamer; pentamer of dimers. It depends on Mg(2+) as a cofactor.

It is found in the cytoplasm. It catalyses the reaction 3-methyl-2-oxobutanoate + (6R)-5,10-methylene-5,6,7,8-tetrahydrofolate + H2O = 2-dehydropantoate + (6S)-5,6,7,8-tetrahydrofolate. It participates in cofactor biosynthesis; coenzyme A biosynthesis. In terms of biological role, catalyzes the reversible reaction in which hydroxymethyl group from 5,10-methylenetetrahydrofolate is transferred onto alpha-ketoisovalerate to form ketopantoate. The chain is 3-methyl-2-oxobutanoate hydroxymethyltransferase from Sulfurisphaera tokodaii (strain DSM 16993 / JCM 10545 / NBRC 100140 / 7) (Sulfolobus tokodaii).